Consider the following 751-residue polypeptide: Transposable element P transposase (751 aa).

The segment at 1 to 77 (MKYCKFCCKA…LNADAVPSKV (77 aa)) adopts a THAP-type zinc-finger fold.

In terms of biological role, P-element transposase that specifically mediates transposition of P-elements. Mediates both; precise and imprecise excision. This is Transposable element P transposase from Drosophila melanogaster (Fruit fly).